Here is a 190-residue protein sequence, read N- to C-terminus: NADH-dependent phenylglyoxylate dehydrogenase subunit gamma (190 aa).

Dimer of heteropentamers composed of an alpha (PadG), a beta (PadI), a gamma (PadE), a delta (PadF) and an epsilon (PadH) subunit.

It catalyses the reaction phenylglyoxylate + NAD(+) + CoA = benzoyl-CoA + CO2 + NADH. With respect to regulation, activated by magnesium ions and thiamine diphosphate. In terms of biological role, involved in the anaerobic metabolism of phenylalanine and phenylacetate. Catalyzes the oxidative decarboxylation of phenylglyoxylate to benzoyl-CoA and CO(2). It can also react slowly with 2-oxo-3-methylbutanoate and use different electron acceptors such as benzyl viologen, methyl viologen, FAD or FMN, but NAD seems to be the physiological electron acceptor. Also catalyzes an isotope exchange between CO(2) and the carboxyl group which proves partial or complete reversibility of the oxidative decarboxylation reaction. The polypeptide is NADH-dependent phenylglyoxylate dehydrogenase subunit gamma (padE) (Aromatoleum evansii (Azoarcus evansii)).